The chain runs to 197 residues: Probable UbiX-like flavin prenyltransferase (197 aa).

FMN-binding positions include 9–11 (GAT), serine 36, 87–90 (SMKT), and arginine 122.

Belongs to the UbiX/PAD1 family. YclB subfamily. In terms of assembly, homododecamer.

The catalysed reaction is dimethylallyl phosphate + FMNH2 = prenylated FMNH2 + phosphate. Functionally, flavin prenyltransferase that catalyzes the synthesis of the prenylated FMN cofactor (prenyl-FMN) for phenolic acid decarboxylase C. Involved in the decarboxylation and detoxification of phenolic derivatives under both aerobic and anaerobic conditions. In Escherichia coli O111:H-, this protein is Probable UbiX-like flavin prenyltransferase (ecdB).